The primary structure comprises 120 residues: Small ribosomal subunit protein uS17m (120 aa).

A mitochondrion-targeting transit peptide spans 1 to 20; sequence MSIVRSSVHAKWVVGKVIGT.

The protein belongs to the universal ribosomal protein uS17 family. Component of the mitochondrial ribosome small subunit (28S) which comprises a 12S rRNA and about 30 distinct proteins.

The protein resides in the mitochondrion. In Mus musculus (Mouse), this protein is Small ribosomal subunit protein uS17m (Mrps17).